An 859-amino-acid polypeptide reads, in one-letter code: Probable helicase A859L (859 aa).

One can recognise a Helicase ATP-binding domain in the interval tyrosine 178–alanine 349. ATP is bound at residue methionine 191–threonine 198. Positions aspartate 298–histidine 301 match the DEAH box motif. A Helicase C-terminal domain is found at glutamine 394–serine 553.

The protein belongs to the asfivirus helicase A859L family.

The polypeptide is Probable helicase A859L (Ornithodoros (relapsing fever ticks)).